The sequence spans 415 residues: ATP-dependent Clp protease ATP-binding subunit ClpX (415 aa).

The ClpX-type ZB domain maps to 1–52 (MAESKNNKKRCSFCGRSENEVGFLITGMNGYICDSCATQAYEITQEAMGAGK). The Zn(2+) site is built by Cys-11, Cys-14, Cys-33, and Cys-36. 121–128 (STGTGKTL) is an ATP binding site.

This sequence belongs to the ClpX chaperone family. As to quaternary structure, component of the ClpX-ClpP complex. Forms a hexameric ring that, in the presence of ATP, binds to fourteen ClpP subunits assembled into a disk-like structure with a central cavity, resembling the structure of eukaryotic proteasomes.

Its function is as follows. ATP-dependent specificity component of the Clp protease. It directs the protease to specific substrates. Can perform chaperone functions in the absence of ClpP. In Bacteroides fragilis (strain ATCC 25285 / DSM 2151 / CCUG 4856 / JCM 11019 / LMG 10263 / NCTC 9343 / Onslow / VPI 2553 / EN-2), this protein is ATP-dependent Clp protease ATP-binding subunit ClpX.